Here is a 158-residue protein sequence, read N- to C-terminus: Endoribonuclease YbeY (158 aa).

Histidine 118, histidine 122, and histidine 128 together coordinate Zn(2+).

This sequence belongs to the endoribonuclease YbeY family. Zn(2+) is required as a cofactor.

It localises to the cytoplasm. Its function is as follows. Single strand-specific metallo-endoribonuclease involved in late-stage 70S ribosome quality control and in maturation of the 3' terminus of the 16S rRNA. This is Endoribonuclease YbeY from Bartonella bacilliformis (strain ATCC 35685 / KC583 / Herrer 020/F12,63).